Consider the following 157-residue polypeptide: 2-C-methyl-D-erythritol 2,4-cyclodiphosphate synthase (157 aa).

D8 and H10 together coordinate a divalent metal cation. 4-CDP-2-C-methyl-D-erythritol 2-phosphate-binding positions include 8-10 (DVH) and 34-35 (HS). H42 contributes to the a divalent metal cation binding site. Residues 56-58 (DIG), 61-65 (FPDTD), 100-106 (AQAPKMA), 132-135 (TTTE), F139, and R142 each bind 4-CDP-2-C-methyl-D-erythritol 2-phosphate.

Belongs to the IspF family. In terms of assembly, homotrimer. It depends on a divalent metal cation as a cofactor.

The enzyme catalyses 4-CDP-2-C-methyl-D-erythritol 2-phosphate = 2-C-methyl-D-erythritol 2,4-cyclic diphosphate + CMP. It participates in isoprenoid biosynthesis; isopentenyl diphosphate biosynthesis via DXP pathway; isopentenyl diphosphate from 1-deoxy-D-xylulose 5-phosphate: step 4/6. Involved in the biosynthesis of isopentenyl diphosphate (IPP) and dimethylallyl diphosphate (DMAPP), two major building blocks of isoprenoid compounds. Catalyzes the conversion of 4-diphosphocytidyl-2-C-methyl-D-erythritol 2-phosphate (CDP-ME2P) to 2-C-methyl-D-erythritol 2,4-cyclodiphosphate (ME-CPP) with a corresponding release of cytidine 5-monophosphate (CMP). The polypeptide is 2-C-methyl-D-erythritol 2,4-cyclodiphosphate synthase (Edwardsiella ictaluri (strain 93-146)).